The primary structure comprises 344 residues: Beta-hexosaminidase (344 aa).

Substrate is bound by residues Asp60, Arg68, Arg132, and 162-163 (KH). His175 functions as the Proton donor/acceptor in the catalytic mechanism. Catalysis depends on Asp247, which acts as the Nucleophile.

It belongs to the glycosyl hydrolase 3 family. NagZ subfamily.

The protein resides in the cytoplasm. It carries out the reaction Hydrolysis of terminal non-reducing N-acetyl-D-hexosamine residues in N-acetyl-beta-D-hexosaminides.. Its pathway is cell wall biogenesis; peptidoglycan recycling. In terms of biological role, plays a role in peptidoglycan recycling by cleaving the terminal beta-1,4-linked N-acetylglucosamine (GlcNAc) from peptide-linked peptidoglycan fragments, giving rise to free GlcNAc, anhydro-N-acetylmuramic acid and anhydro-N-acetylmuramic acid-linked peptides. In Haemophilus ducreyi (strain 35000HP / ATCC 700724), this protein is Beta-hexosaminidase.